The sequence spans 474 residues: UDP-N-acetylmuramoyl-L-alanyl-D-glutamate--2,6-diaminopimelate ligase (474 aa).

S21 is a binding site for UDP-N-acetyl-alpha-D-muramoyl-L-alanyl-D-glutamate. An ATP-binding site is contributed by G93–S99. UDP-N-acetyl-alpha-D-muramoyl-L-alanyl-D-glutamate-binding positions include T139 to T140, S166, Q172, and R174. An N6-carboxylysine modification is found at K206. Residues R367, D391–R394, G441, and E445 each bind meso-2,6-diaminopimelate. A Meso-diaminopimelate recognition motif motif is present at residues D391–R394.

This sequence belongs to the MurCDEF family. MurE subfamily. Mg(2+) is required as a cofactor. Post-translationally, carboxylation is probably crucial for Mg(2+) binding and, consequently, for the gamma-phosphate positioning of ATP.

Its subcellular location is the cytoplasm. The catalysed reaction is UDP-N-acetyl-alpha-D-muramoyl-L-alanyl-D-glutamate + meso-2,6-diaminopimelate + ATP = UDP-N-acetyl-alpha-D-muramoyl-L-alanyl-gamma-D-glutamyl-meso-2,6-diaminopimelate + ADP + phosphate + H(+). It functions in the pathway cell wall biogenesis; peptidoglycan biosynthesis. Catalyzes the addition of meso-diaminopimelic acid to the nucleotide precursor UDP-N-acetylmuramoyl-L-alanyl-D-glutamate (UMAG) in the biosynthesis of bacterial cell-wall peptidoglycan. The protein is UDP-N-acetylmuramoyl-L-alanyl-D-glutamate--2,6-diaminopimelate ligase of Rickettsia bellii (strain RML369-C).